Consider the following 540-residue polypeptide: Chaperonin GroEL (540 aa).

Residues 30–33 (TLGP), Lys51, 87–91 (DGTTT), Gly415, and Asp495 each bind ATP.

The protein belongs to the chaperonin (HSP60) family. Forms a cylinder of 14 subunits composed of two heptameric rings stacked back-to-back. Interacts with the co-chaperonin GroES.

The protein resides in the cytoplasm. It carries out the reaction ATP + H2O + a folded polypeptide = ADP + phosphate + an unfolded polypeptide.. Functionally, together with its co-chaperonin GroES, plays an essential role in assisting protein folding. The GroEL-GroES system forms a nano-cage that allows encapsulation of the non-native substrate proteins and provides a physical environment optimized to promote and accelerate protein folding. The polypeptide is Chaperonin GroEL (Erwinia aphidicola).